Here is a 237-residue protein sequence, read N- to C-terminus: Sugar fermentation stimulation protein homolog (237 aa).

Belongs to the SfsA family.

The chain is Sugar fermentation stimulation protein homolog from Pseudomonas savastanoi pv. phaseolicola (strain 1448A / Race 6) (Pseudomonas syringae pv. phaseolicola (strain 1448A / Race 6)).